Consider the following 212-residue polypeptide: MKAFTTLQGLVCPLDRANVDTDAIIPKQFLKSIKRSGFGPNLFDEWRYLDHGEPGMDNAKRPLNPDFVLNQPRYQGAQVLLARENFGCGSSREHAPWALDDQGFRVVIAPSFADIFFNNCYKNGLLPIVLAADIVDQLFQECEAAPGYSLKVDLAAQTVFTPSGQAFLFDITEHRKHCLLGGLDEIGLTLQHADEIKAFEARRRVEQPWLFA.

It belongs to the LeuD family. LeuD type 1 subfamily. In terms of assembly, heterodimer of LeuC and LeuD.

The catalysed reaction is (2R,3S)-3-isopropylmalate = (2S)-2-isopropylmalate. The protein operates within amino-acid biosynthesis; L-leucine biosynthesis; L-leucine from 3-methyl-2-oxobutanoate: step 2/4. In terms of biological role, catalyzes the isomerization between 2-isopropylmalate and 3-isopropylmalate, via the formation of 2-isopropylmaleate. The polypeptide is 3-isopropylmalate dehydratase small subunit 2 (Chromobacterium violaceum (strain ATCC 12472 / DSM 30191 / JCM 1249 / CCUG 213 / NBRC 12614 / NCIMB 9131 / NCTC 9757 / MK)).